The following is a 13477-amino-acid chain: Mucin-3B (13477 aa).

The N-terminal stretch at 1 to 21 is a signal peptide; the sequence is MQLLGLLSILWMLKSSPGATG. The span at 219 to 234 shows a compositional bias: low complexity; the sequence is TISSTTRTTERTPLPT. Disordered stretches follow at residues 219-243, 327-347, 360-383, 513-559, 622-643, 815-839, 923-968, 1154-1179, 1480-1511, 1529-1601, 1619-1638, 1692-1714, 1944-1968, 2064-2123, 2170-2197, 2275-2308, 2442-2462, 2476-2497, 2509-2537, 2591-2610, 2672-2717, 2812-2832, 2845-2867, 2922-2947, 3074-3109, 3309-3395, 3420-3481, 3545-3565, 3654-3727, 3740-3812, 4014-4047, 4067-4106, 4182-4249, 4269-4313, 4510-4530, 4557-4617, 4630-4651, 4802-4830, 4953-4986, 5128-5203, 5455-5486, 5627-5680, 5834-5908, 5957-5977, 5990-6017, 6030-6080, 6120-6150, 6172-6197, 6456-6481, 6541-6598, 6846-6867, 6946-6971, 6999-7021, 7067-7093, 7170-7206, 7225-7244, 7299-7329, 7400-7433, 7476-7532, 7578-7600, 7731-7766, 7922-7996, 8036-8066, 8088-8113, 8372-8397, 8457-8514, 8762-8783, 8862-8887, 8915-8941, 8983-9009, 9052-9122, 9141-9160, 9215-9240, 9335-9366, 9409-9465, 9566-9589, 9612-9674, 9734-9760, 9828-9859, 9883-9908, 9921-9973, 10076-10099, 10120-10166, 10189-10285, 10389-10425, 10462-10481, 10501-10537, 10640-10660, 10750-10828, 10887-11032, 11044-11065, 11276-11317, 11446-11482, 11566-11697, 11754-11779, 11818-11949, 12067-12103, 12186-12220, 12280-12323, 12364-12452, 12468-12578, 12616-12639, 12681-12700, 12785-12805, 12985-13011, and 13052-13086; these read TISS…TMSP, TRST…TVTD, GTLS…TPMT, SMTT…PSTL, ATTP…STPS, TTTN…TGTG, TSQT…STTE, PSMS…TSTL, SPTV…STEN, SISA…FPET, MTST…VTSM, TTST…TDSM, TTSA…TFTS, TPNA…IAKS, STSM…SGGI, SSSM…AEST, RSTP…VKGS, LSME…TATT, SHST…GPPT, SAMS…TETS, TSTL…FSSS, TTIT…STST, TMTE…STTE, SRIP…SVGI, ETPS…TPDI, TTSH…NSNS, ITTT…SHST, STTS…STPS, SITT…STTA, ITTI…TTAE, TETT…SIAT, TSNS…HSTP, TTET…SSIT, NSTS…PSFT, SHST…SHST, TETT…STSS, YSPS…STPS, TSSF…TATG, HSLP…KTIS, YTSS…ITTT, ITNT…PSFT, TTKT…ATSK, TTSY…HSPP, STPS…SSPS, HSTA…SSIT, TSSI…PPIF, TTET…SFTS, TEST…HTPP, TETP…HSTP, TKTT…TSTS, TTGT…TKTT, ITTT…RTSH, TTES…ETRS, TTET…HSPP, TETA…TTGI, SHST…ISHS, FTSS…TSHS, SYTS…HRTP, TETI…TTST, TGTS…TTSH, TEIT…ATSK, SHST…PPIF, TTES…HSPP, AETT…TTGI, FTSS…TSTE, TSSI…HRTP, SHST…NPSL, TTET…PPSF, TTSH…SSFT, TSSI…HSTP, TTTE…RSHS, TTSH…SKTI, SDST…SPSF, ITTT…TVPS, ITTE…SPLS, TSSI…LSSA, TTKT…TSTK, SHSS…TSTS, TTSF…TPSF, TTTE…QRSP, TTET…SPSS, SHST…HSTP, TGTE…SPSH, STTA…ITTT, TTET…PGFS, TKTT…HSTP, SIAT…HSPP, TSSF…STPV, PSYT…HSTP, TETT…STPI, TTET…TTET, EMTS…NTPS, FTTA…DIPT, SSPS…TSPT, IPST…LQTS, TSSM…TVPT, and SLPT…TPTT. 2 stretches are compositionally biased toward low complexity: residues 513–538 and 547–559; these read SMTT…LSST and TSHT…PSTL. A compositionally biased stretch (low complexity) spans 1620–1638; that stretch reads TSTPPITSSVTPTNTVTSM. Positions 1944–1956 are enriched in polar residues; sequence TTSATMEPPSSSV. Low complexity predominate over residues 1957-1968; the sequence is AATDTGQTTFTS. Residues 2066–2091 show a composition bias toward polar residues; it reads NASSMTTSETTYPNSPTGPVTNSMSK. The span at 2096–2107 shows a compositional bias: low complexity; that stretch reads ASMTQTSSTATS. The span at 2113–2123 shows a compositional bias: polar residues; sequence PSGSTTEIAKS. A compositionally biased stretch (low complexity) spans 2170–2185; it reads STSMTPSTVSTSIPTS. Polar residues predominate over residues 2186–2195; that stretch reads QPKTVNSSSG. Composition is skewed to low complexity over residues 2292-2308 and 2442-2458; these read SSPP…AEST and RSTP…PTST. Residues 2591 to 2603 are compositionally biased toward low complexity; it reads SAMSTSDIPSSPS. 2 stretches are compositionally biased toward low complexity: residues 2929–2944 and 3074–3097; these read STDI…TPSS and ETPS…TATS. A compositionally biased stretch (polar residues) spans 3098 to 3109; that stretch reads PETNTLTPTPDI. Residues 3309–3359 are compositionally biased toward low complexity; the sequence is TTSHSTPSFTSPIATTKTSSHSSPSFTSSIATLETTSHSTPSFTSSITTNS. Positions 3360-3370 are enriched in polar residues; the sequence is HSTPRFSSSIA. Residues 3371-3385 are compositionally biased toward low complexity; that stretch reads TRETTSHSTSSFTPS. A compositionally biased stretch (polar residues) spans 3386-3395; it reads IATTKTNSNS. A compositionally biased stretch (low complexity) spans 3420-3452; it reads ITTTETTSHSTPSFTSSMATTKTTSHSTPSFTS. A compositionally biased stretch (polar residues) spans 3453–3462; the sequence is PIATRETTSH. Low complexity predominate over residues 3463-3481; sequence STPSFTSLITTTKTTSHST. The span at 3740 to 3749 shows a compositional bias: polar residues; sequence ITTIETPSHG. The span at 3750–3785 shows a compositional bias: low complexity; the sequence is TPSFTSSITSTETTSHSSPSFISSITTTEITSHSTP. The segment covering 3786-3812 has biased composition (polar residues); it reads RFTSSITTMETPSHSTPNFTSSITTAE. 2 stretches are compositionally biased toward low complexity: residues 4020–4042 and 4067–4096; these read STPS…PSFT and TSNS…SSMT. The span at 4097–4106 shows a compositional bias: polar residues; that stretch reads ATETTSHSTP. 2 stretches are compositionally biased toward low complexity: residues 4182-4228 and 4237-4249; these read TTET…PSFT and TSHS…SSIT. Over residues 4557 to 4574 the composition is skewed to low complexity; sequence TETTSNSSPSFTSSITNT. The segment covering 4575–4601 has biased composition (polar residues); sequence KTTSYSPPGFTSSIPATETTSRSPPGF. A compositionally biased stretch (low complexity) spans 4602-4617; that stretch reads TSSITTTETTSHSTSS. Positions 4802-4827 are enriched in low complexity; the sequence is TSSFTSSITSTETTSHSTPSLTSSIT. Residues 5137 to 5158 are compositionally biased toward low complexity; that stretch reads TPSHITPSFTSTITTSESTSHS. A compositionally biased stretch (polar residues) spans 5159–5170; sequence NPSLTSAITTTE. 2 stretches are compositionally biased toward low complexity: residues 5174–5203 and 5458–5486; these read HSPP…ITTT and TEST…PSFT. The segment covering 5834–5858 has biased composition (low complexity); it reads TTSYSTPSITSSITTTERTSHSTPS. Residues 5859 to 5874 are compositionally biased toward polar residues; that stretch reads YTSSIATRETPSHTVP. Over residues 5875 to 5889 the composition is skewed to low complexity; the sequence is SFTSSITTTESTSHS. The span at 5890–5901 shows a compositional bias: polar residues; the sequence is NPSLTSAITTTE. The span at 6045 to 6059 shows a compositional bias: low complexity; sequence SFTSSITTTDSTSHS. Residues 6060 to 6071 are compositionally biased toward polar residues; the sequence is NPSLTSAITTTE. Residues 6172-6185 are compositionally biased toward low complexity; the sequence is TESTSHSTPSFTSS. Polar residues predominate over residues 6186 to 6197; the sequence is IATTETTSHTPP. A compositionally biased stretch (low complexity) spans 6456–6475; sequence TETPSHSTPSFPSSITTTQS. Polar residues predominate over residues 6852-6867; it reads HNTLGLSSSVDTTKTT. Low complexity predominate over residues 6946–6965; sequence ITTTETTSHSTPSITSSVTT. Residues 6999-7018 show a composition bias toward polar residues; it reads TTESTSHSNPSLTSAITTTE. A compositionally biased stretch (low complexity) spans 7172–7206; it reads TASHSNPSSTSSITTTESTSHSPPRSTSAIATTGI. Composition is skewed to low complexity over residues 7300–7329 and 7400–7427; these read TSSI…TSHS and SYTS…STET. The segment covering 7476–7491 has biased composition (polar residues); it reads TETISHSPPSFTSLTN. The span at 7492–7532 shows a compositional bias: low complexity; the sequence is STETTSHSPPSFTSSSTTTETPSHSTPGFSSSIATSKTTST. Low complexity-rich tracts occupy residues 7734-7766 and 7922-7944; these read TSHS…ATSK and SHST…STPS. Over residues 7945 to 7987 the composition is skewed to polar residues; the sequence is YTSSIATSETPSHTVPSFTSLITTTDSTSHSNPSLTSAITTTE. Residues 8088–8101 show a composition bias toward low complexity; it reads TESTSHSTPSFTSS. A compositionally biased stretch (polar residues) spans 8102–8113; the sequence is IATTETTSHTPP. Over residues 8372-8391 the composition is skewed to low complexity; sequence TETPSHSTPSFPSSITTTQS. A compositionally biased stretch (polar residues) spans 8768–8783; sequence HNTLGLSSSVDTTKTT. Low complexity predominate over residues 8862–8881; that stretch reads ITTTETTSHSTPSITSSVTT. Over residues 8915-8934 the composition is skewed to polar residues; that stretch reads TTESTSHSNPSLTSAITTTE. Low complexity-rich tracts occupy residues 9067–9081 and 9088–9122; these read PTTE…SFTS and TASH…TTGI. Residues 9335-9360 show a composition bias toward low complexity; the sequence is TSSITTTETPSHSSPSFPSSITSTET. Positions 9409–9424 are enriched in polar residues; that stretch reads TETISHSPPSFTSLTN. Composition is skewed to low complexity over residues 9425-9465, 9566-9585, and 9612-9624; these read STET…TTST, SHST…TSHS, and TTET…PSFT. Residues 9625–9661 are compositionally biased toward polar residues; sequence SSIATAETTSHSPPSFTSLITTSETPSHSNPSFTSLI. Over residues 9662 to 9674 the composition is skewed to low complexity; the sequence is TTTESTSHSPPSF. Polar residues-rich tracts occupy residues 9892–9903 and 9921–9933; these read NPSLTSAITNTE and TTSH…TSLI. A compositionally biased stretch (low complexity) spans 9934-9973; the sequence is TSTETTSHSPPSFTSSSTTTETPSHSTPGFSSSIATSKTI. The segment covering 10120–10130 has biased composition (low complexity); it reads ITTTETTSHST. A compositionally biased stretch (polar residues) spans 10131–10166; that stretch reads PNITSSVTTTERTSHSTPSYTSSIATGETPSHTVPS. Low complexity-rich tracts occupy residues 10196 to 10271 and 10394 to 10421; these read HSPP…SFTS and TSET…STPS. Polar residues predominate over residues 10750–10791; the sequence is TTTETTSHSPPRFTSSITTTKTPSDSTPVFTPSIATSETSSH. Composition is skewed to low complexity over residues 10792 to 10828, 10887 to 10937, and 10950 to 11032; these read STPG…QRSP, TTET…SSIT, and PSSI…SPSS. Over residues 11278–11291 the composition is skewed to low complexity; sequence TETTSHSPPHFTSS. A compositionally biased stretch (polar residues) spans 11292 to 11317; the sequence is ITRTKTTSHRPPTFTSSITTTESPSH. Positions 11566-11682 are enriched in low complexity; it reads TTETTSHSIP…SHSTSGFTSS (117 aa). 2 stretches are compositionally biased toward polar residues: residues 11683–11697 and 11754–11769; these read NATT…PGFS and TKTT…SSIA. 2 stretches are compositionally biased toward low complexity: residues 11770 to 11779 and 11818 to 11880; these read STKTTSHSTP and SIAT…SHST. Composition is skewed to polar residues over residues 11881–11896 and 11903–11912; these read PSFT…TSHS and LIPTTKTTLH. Low complexity-rich tracts occupy residues 11913–11949 and 12067–12091; these read SPPS…HSPP and TSSF…TSSI. Over residues 12092-12103 the composition is skewed to polar residues; sequence AVTETPSDSTPV. The span at 12280–12309 shows a compositional bias: low complexity; the sequence is TETTSHSAPNFSSSITSTETTSHSTPSFTS. Residues 12310 to 12323 show a composition bias toward polar residues; the sequence is AITSTETTSHSTPI. Over residues 12364 to 12412 the composition is skewed to low complexity; sequence TTETTSHSTPGFASSITTTKTTSHSTPSFTSSIATSNTTSSSTPGFTSS. Residues 12413–12439 show a composition bias toward polar residues; that stretch reads IATTETTSRSTPGFTSSIVTTETTSPH. Residues 12440-12452 are compositionally biased toward low complexity; the sequence is TPGFTSSITTTET. The span at 12468–12477 shows a compositional bias: polar residues; that stretch reads EMTSHSTPSL. 6 stretches are compositionally biased toward low complexity: residues 12478–12569, 12624–12639, 12681–12692, 12794–12805, 12990–13003, and 13073–13086; these read TFSI…VTTP, TSTP…DIPT, SSPSIQSTETSS, QTTPSIPSLQTS, PESE…ASSS, and TSET…TPTT. An EGF-like domain is found at 13130-13163; the sequence is SGDRCQLQTRCQNGGQWDGLKCQCPSTFYGSSCE. Disulfide bonds link C13134/C13140 and C13153/C13162. The 126-residue stretch at 13172 to 13297 folds into the SEA domain; that stretch reads DVVETEVGME…DSIKVNNNSK (126 aa). The helical transmembrane segment at 13381-13401 threads the bilayer; the sequence is LVGGLTAGAALLVLLLLALGV.

Highly O-glycosylated and probably also N-glycosylated. In terms of tissue distribution, fetal and adult small intestine and fetal and adult colon.

It is found in the membrane. Major glycoprotein component of a variety of mucus gels. Thought to provide a protective, lubricating barrier against particles and infectious agents at mucosal surfaces. The protein is Mucin-3B of Homo sapiens (Human).